The chain runs to 128 residues: Ribosome-binding factor A (128 aa).

It belongs to the RbfA family. As to quaternary structure, monomer. Binds 30S ribosomal subunits, but not 50S ribosomal subunits or 70S ribosomes.

The protein localises to the cytoplasm. One of several proteins that assist in the late maturation steps of the functional core of the 30S ribosomal subunit. Associates with free 30S ribosomal subunits (but not with 30S subunits that are part of 70S ribosomes or polysomes). Required for efficient processing of 16S rRNA. May interact with the 5'-terminal helix region of 16S rRNA. The sequence is that of Ribosome-binding factor A from Geobacillus thermodenitrificans (strain NG80-2).